A 93-amino-acid chain; its full sequence is CRISPR-associated endoribonuclease Cas2 1 (93 aa).

A Mg(2+)-binding site is contributed by aspartate 8.

This sequence belongs to the CRISPR-associated endoribonuclease Cas2 protein family. In terms of assembly, homodimer, forms a heterotetramer with a Cas1 homodimer. Mg(2+) is required as a cofactor.

CRISPR (clustered regularly interspaced short palindromic repeat), is an adaptive immune system that provides protection against mobile genetic elements (viruses, transposable elements and conjugative plasmids). CRISPR clusters contain sequences complementary to antecedent mobile elements and target invading nucleic acids. CRISPR clusters are transcribed and processed into CRISPR RNA (crRNA). Functions as a ssRNA-specific endoribonuclease. Involved in the integration of spacer DNA into the CRISPR cassette. This Chloroflexus aurantiacus (strain ATCC 29366 / DSM 635 / J-10-fl) protein is CRISPR-associated endoribonuclease Cas2 1.